Reading from the N-terminus, the 158-residue chain is MPRKLPSSPKTSALQLGRAVAWPGSPEEAKLDRVPNPQKGTNYVARFTAPEFTTLCPVTGQPDFAHLVIDYVPGSWLLESKSLKLYLASFRNHGAFHEDCTVAIGKRIATAVRPKWLRIGGYWYPRGGIPIDVFWQTGTVPKGVWIPDQSVPAYRGRG.

C56 acts as the Thioimide intermediate in catalysis. The active-site Proton donor is D63. Residues 78 to 80 and 97 to 98 each bind substrate; these read LES and HE.

Belongs to the GTP cyclohydrolase I family. QueF type 1 subfamily.

The protein localises to the cytoplasm. It carries out the reaction 7-aminomethyl-7-carbaguanine + 2 NADP(+) = 7-cyano-7-deazaguanine + 2 NADPH + 3 H(+). It participates in tRNA modification; tRNA-queuosine biosynthesis. In terms of biological role, catalyzes the NADPH-dependent reduction of 7-cyano-7-deazaguanine (preQ0) to 7-aminomethyl-7-deazaguanine (preQ1). The sequence is that of NADPH-dependent 7-cyano-7-deazaguanine reductase from Nitrobacter hamburgensis (strain DSM 10229 / NCIMB 13809 / X14).